The chain runs to 308 residues: GMP synthase [glutamine-hydrolyzing] subunit B (308 aa).

Residues 2–183 (LNPSDFIEEA…LGLPREMIQR (182 aa)) enclose the GMPS ATP-PPase domain. 29-35 (SGGVDSS) serves as a coordination point for ATP.

As to quaternary structure, heterodimer composed of a glutamine amidotransferase subunit (A) and a GMP-binding subunit (B).

It carries out the reaction XMP + L-glutamine + ATP + H2O = GMP + L-glutamate + AMP + diphosphate + 2 H(+). The protein operates within purine metabolism; GMP biosynthesis; GMP from XMP (L-Gln route): step 1/1. In terms of biological role, catalyzes the synthesis of GMP from XMP. The sequence is that of GMP synthase [glutamine-hydrolyzing] subunit B (guaAB) from Methanothermobacter thermautotrophicus (strain ATCC 29096 / DSM 1053 / JCM 10044 / NBRC 100330 / Delta H) (Methanobacterium thermoautotrophicum).